The chain runs to 490 residues: Metal cation symporter ZIP14 (490 aa).

The first 28 residues, 1-28 (MKLLHPAFQSCLLLTLLGLWRTTPEAHA), serve as a signal peptide directing secretion. The Extracellular portion of the chain corresponds to 29–155 (SSPGAPAISA…PSAVEVWGYG (127 aa)). N75, N85, and N100 each carry an N-linked (GlcNAc...) asparagine glycan. A helical membrane pass occupies residues 156 to 176 (LLCVTVISLCSLLGASVVPFM). Topologically, residues 177 to 184 (KKTFYKRL) are cytoplasmic. The helical transmembrane segment at 185–205 (LLYFIALAIGTLYSNALFQLI) threads the bilayer. Residues 206–222 (PEAFGFNPLEDYYVSKS) are Extracellular-facing. The chain crosses the membrane as a helical span at residues 223–243 (AVVFGGFYLFFFTEKILKILL). The Cytoplasmic portion of the chain corresponds to 244–395 (KQKNEHHHGH…LLNAGMSIQQ (152 aa)). An HHHGHXHX-motif motif is present at residues 249 to 256 (HHHGHSHY). The XEXPHE-motif motif lies at 374–379 (EEFPHE). A helical transmembrane segment spans residues 396-416 (ALFFNFLSACCCYLGLAFGIL). The Extracellular portion of the chain corresponds to 417–422 (AGSHFS). Residues 423-443 (ANWIFALAGGMFLYISLADMF) traverse the membrane as a helical segment. Residues 444–458 (PEMNEVCQEDERKGS) are Cytoplasmic-facing. Residues 459 to 479 (ILIPFVIQNLGLLTGFTIMVV) form a helical membrane-spanning segment. Residues 480–490 (LTMYSGQIQIG) lie on the Extracellular side of the membrane.

This sequence belongs to the ZIP transporter (TC 2.A.5) family. In terms of assembly, homotrimer. Ubiquitinated. Ubiquitination occurs upon iron depletion. The ubiquitinated form undergoes proteasomal degradation. Post-translationally, N-glycosylated. N-glycosylation at Asn-100 is required for iron-regulated extraction of the transporter from membranes and subsequent proteasomal degradation.

The protein resides in the cell membrane. It localises to the apical cell membrane. The protein localises to the basolateral cell membrane. It is found in the early endosome membrane. Its subcellular location is the late endosome membrane. The protein resides in the lysosome membrane. The enzyme catalyses Zn(2+)(out) + 2 hydrogencarbonate(out) = Zn(2+)(in) + 2 hydrogencarbonate(in). It carries out the reaction Mn(2+)(out) + 2 hydrogencarbonate(out) = Mn(2+)(in) + 2 hydrogencarbonate(in). The catalysed reaction is Fe(2+)(out) + 2 hydrogencarbonate(out) = Fe(2+)(in) + 2 hydrogencarbonate(in). It catalyses the reaction Cd(2+)(out) + 2 hydrogencarbonate(out) = Cd(2+)(in) + 2 hydrogencarbonate(in). Its function is as follows. Electroneutral transporter of the plasma membrane mediating the cellular uptake of the divalent metal cations zinc, manganese and iron that are important for tissue homeostasis, metabolism, development and immunity. Functions as an energy-dependent symporter, transporting through the membranes an electroneutral complex composed of a divalent metal cation and two bicarbonate anions. Beside these endogenous cellular substrates, can also import cadmium a non-essential metal which is cytotoxic and carcinogenic. Controls the cellular uptake by the intestinal epithelium of systemic zinc, which is in turn required to maintain tight junctions and the intestinal permeability. Modifies the activity of zinc-dependent phosphodiesterases, thereby indirectly regulating G protein-coupled receptor signaling pathways important for gluconeogenesis and chondrocyte differentiation. Regulates insulin receptor signaling, glucose uptake, glycogen synthesis and gluconeogenesis in hepatocytes through the zinc-dependent intracellular catabolism of insulin. Through zinc cellular uptake also plays a role in the adaptation of cells to endoplasmic reticulum stress. Major manganese transporter of the basolateral membrane of intestinal epithelial cells, it plays a central role in manganese systemic homeostasis through intestinal manganese uptake. Also involved in manganese extracellular uptake by cells of the blood-brain barrier. May also play a role in manganese and zinc homeostasis participating in their elimination from the blood through the hepatobiliary excretion. Also functions in the extracellular uptake of free iron. May also function intracellularly and mediate the transport from endosomes to cytosol of iron endocytosed by transferrin. Plays a role in innate immunity by regulating the expression of cytokines by activated macrophages. The polypeptide is Metal cation symporter ZIP14 (Pongo abelii (Sumatran orangutan)).